Consider the following 274-residue polypeptide: Sulfur carrier protein FdhD (274 aa).

Residue Cys-120 is the Cysteine persulfide intermediate of the active site.

This sequence belongs to the FdhD family.

It is found in the cytoplasm. Its function is as follows. Required for formate dehydrogenase (FDH) activity. Acts as a sulfur carrier protein that transfers sulfur from IscS to the molybdenum cofactor prior to its insertion into FDH. This is Sulfur carrier protein FdhD from Burkholderia mallei (strain ATCC 23344).